A 795-amino-acid polypeptide reads, in one-letter code: Copper-exporting P-type ATPase (795 aa).

2 consecutive HMA domains span residues 5–70 (QNAT…YDVV) and 72–138 (DKAE…YDAQ). Residues Cys16, Cys19, Cys83, and Cys86 each contribute to the Cu(+) site. Helical transmembrane passes span 161–181 (LMIS…HLFN), 187–207 (ILMN…IIGW), 224–244 (MDVL…YEMI), 256–276 (LYFE…YLEA), 412–432 (YFVP…ITLV), and 440–460 (ALVA…GLAT). Asp496 serves as the catalytic 4-aspartylphosphate intermediate. Residues Asp690 and Asp694 each contribute to the Mg(2+) site. The next 2 helical transmembrane spans lie at 747–764 (NLFW…IAAM) and 770–788 (WIAG…SNAL).

This sequence belongs to the cation transport ATPase (P-type) (TC 3.A.3) family. Type IB subfamily.

It localises to the cell membrane. It catalyses the reaction Cu(+)(in) + ATP + H2O = Cu(+)(out) + ADP + phosphate + H(+). Involved in copper export. In Staphylococcus haemolyticus (strain JCSC1435), this protein is Copper-exporting P-type ATPase (copA).